Here is a 111-residue protein sequence, read N- to C-terminus: Inner membrane protein YdgC (111 aa).

At 1–26 (MGLVIKAALGALVVLLIGVLAKTKNY) the chain is on the cytoplasmic side. Residues 27 to 47 (YIAGLIPLFPTFALIAHYIVA) traverse the membrane as a helical segment. Residues 48–58 (SERGIEALRAT) lie on the Periplasmic side of the membrane. The chain crosses the membrane as a helical span at residues 59–79 (IIFSMWSIIPYFVYLVSLWYF). The Cytoplasmic portion of the chain corresponds to 80-87 (TGMMRLPA). The helical transmembrane segment at 88–108 (AFVGSVACWGISAWVLIICWI) threads the bilayer. At 109–111 (KLH) the chain is on the periplasmic side.

This sequence to P.aeruginosa GlpM.

It localises to the cell inner membrane. This is Inner membrane protein YdgC (ydgC) from Escherichia coli O157:H7.